The chain runs to 264 residues: tRNA pseudouridine synthase A (264 aa).

Residue Asp-54 is the Nucleophile of the active site. Tyr-113 lines the substrate pocket.

It belongs to the tRNA pseudouridine synthase TruA family. Homodimer.

The catalysed reaction is uridine(38/39/40) in tRNA = pseudouridine(38/39/40) in tRNA. Formation of pseudouridine at positions 38, 39 and 40 in the anticodon stem and loop of transfer RNAs. The protein is tRNA pseudouridine synthase A of Leptospira biflexa serovar Patoc (strain Patoc 1 / Ames).